A 546-amino-acid chain; its full sequence is Probable protein kinase UbiB (546 aa).

Positions 124–502 (DFDITPLASA…RVKQGQSRYL (379 aa)) constitute a Protein kinase domain. ATP is bound by residues 130-138 (LASASIAQV) and K153. D288 (proton acceptor) is an active-site residue. The next 2 membrane-spanning stretches (helical) occupy residues 501–518 (YLFGIGATLMLSSTLLFI) and 523–542 (WGMSPGWLMAGGILVWLIGW).

This sequence belongs to the ABC1 family. UbiB subfamily.

It is found in the cell inner membrane. It participates in cofactor biosynthesis; ubiquinone biosynthesis [regulation]. Its function is as follows. Is probably a protein kinase regulator of UbiI activity which is involved in aerobic coenzyme Q (ubiquinone) biosynthesis. The chain is Probable protein kinase UbiB from Cronobacter sakazakii (strain ATCC BAA-894) (Enterobacter sakazakii).